The sequence spans 369 residues: D-alanine--D-alanine ligase (369 aa).

The ATP-grasp domain maps to 152–359 (KKLFAAEGLP…YPSLLATMVE (208 aa)). Residue 180–235 (RERLGLPVFVKPARGGSSIGVSRVSSWDELDAAVAAARDHDPKVIVEAAIAGRELE) coordinates ATP. 3 residues coordinate Mg(2+): Asp-314, Glu-326, and Asn-328.

This sequence belongs to the D-alanine--D-alanine ligase family. It depends on Mg(2+) as a cofactor. Requires Mn(2+) as cofactor.

Its subcellular location is the cytoplasm. The enzyme catalyses 2 D-alanine + ATP = D-alanyl-D-alanine + ADP + phosphate + H(+). The protein operates within cell wall biogenesis; peptidoglycan biosynthesis. Functionally, cell wall formation. The chain is D-alanine--D-alanine ligase from Mycobacterium avium (strain 104).